An 831-amino-acid chain; its full sequence is Maltodextrin phosphorylase (831 aa).

At K592 the chain carries N6-(pyridoxal phosphate)lysine.

It belongs to the glycogen phosphorylase family. As to quaternary structure, trimer (at 25 degrees Celsius). Pyridoxal 5'-phosphate serves as cofactor.

The enzyme catalyses [(1-&gt;4)-alpha-D-glucosyl](n) + phosphate = [(1-&gt;4)-alpha-D-glucosyl](n-1) + alpha-D-glucose 1-phosphate. Its function is as follows. Phosphorylase is an important allosteric enzyme in carbohydrate metabolism. Catalyzes the phospholytic cleavage of maltodextrins with a minimal chain length of five glucose residues to yield glucose-1-phosphate. Low activity with tetraose and no activity with triose and maltose. Long maltodextrins (8 to 15 glucose units), amylose and starch are not as good substrates as maltoheptaose. The sequence is that of Maltodextrin phosphorylase (malP) from Thermococcus litoralis (strain ATCC 51850 / DSM 5473 / JCM 8560 / NS-C).